We begin with the raw amino-acid sequence, 366 residues long: Chalcone synthase B (366 aa).

Residue Cys172 is part of the active site.

It belongs to the thiolase-like superfamily. Chalcone/stilbene synthases family.

The catalysed reaction is (E)-4-coumaroyl-CoA + 3 malonyl-CoA + 3 H(+) = 2',4,4',6'-tetrahydroxychalcone + 3 CO2 + 4 CoA. It functions in the pathway secondary metabolite biosynthesis; flavonoid biosynthesis. The primary product of this enzyme is 4,2',4',6'-tetrahydroxychalcone (also termed naringenin-chalcone or chalcone) which can under specific conditions spontaneously isomerize into naringenin. This is Chalcone synthase B (CHSB) from Ipomoea triloba (Trilobed morning glory).